The sequence spans 348 residues: NADH-quinone oxidoreductase subunit H (348 aa).

8 consecutive transmembrane segments (helical) span residues Ile25–Leu45, Phe95–Ile115, Ile128–Gly148, Ile168–Phe188, Trp204–Thr224, Phe254–Phe274, Ile287–Leu307, and Val327–Ala347.

The protein belongs to the complex I subunit 1 family. In terms of assembly, NDH-1 is composed of 14 different subunits. Subunits NuoA, H, J, K, L, M, N constitute the membrane sector of the complex.

Its subcellular location is the cell inner membrane. The enzyme catalyses a quinone + NADH + 5 H(+)(in) = a quinol + NAD(+) + 4 H(+)(out). Functionally, NDH-1 shuttles electrons from NADH, via FMN and iron-sulfur (Fe-S) centers, to quinones in the respiratory chain. The immediate electron acceptor for the enzyme in this species is believed to be ubiquinone. Couples the redox reaction to proton translocation (for every two electrons transferred, four hydrogen ions are translocated across the cytoplasmic membrane), and thus conserves the redox energy in a proton gradient. This subunit may bind ubiquinone. The chain is NADH-quinone oxidoreductase subunit H from Psychrobacter sp. (strain PRwf-1).